Consider the following 74-residue polypeptide: Conotoxin MiK41 (74 aa).

The N-terminal stretch at Met1–Ala22 is a signal peptide. Positions Val23–Pro45 are excised as a propeptide. 3 disulfide bridges follow: Cys48–Cys62, Cys55–Cys66, and Cys61–Cys73.

This sequence belongs to the conotoxin O1 superfamily. As to expression, expressed by the venom duct.

Its subcellular location is the secreted. The polypeptide is Conotoxin MiK41 (Conus miles (Soldier cone)).